The chain runs to 723 residues: Envelope glycoprotein H (723 aa).

Residues 1 to 23 (MSPATRFTVISCLVVSLITPSET) form the signal peptide. The Virion surface segment spans residues 24–700 (SSWFDPFIEW…IIDIRQTSIF (677 aa)). Asn39, Asn45, Asn144, and Asn174 each carry an N-linked (GlcNAc...) asparagine; by host glycan. An interaction with gL region spans residues 197–263 (HQFAIVLTFT…QSYRDDLLIV (67 aa)). 6 N-linked (GlcNAc...) asparagine; by host glycosylation sites follow: Asn270, Asn340, Asn411, Asn543, Asn621, and Asn681. Residues 701 to 721 (MIMLYCSLGVLLLYGLYRLLH) traverse the membrane as a helical segment. The Intravirion portion of the chain corresponds to 722 to 723 (MI).

The protein belongs to the herpesviridae glycoprotein H family. In terms of assembly, interacts with glycoprotein L (gL); this interaction is necessary for the correct processing and cell surface expression of gH. The heterodimer gH/gL seems to interact with gB trimers during fusion. In terms of processing, N-glycosylated, O-glycosylated, and sialylated.

The protein resides in the virion membrane. Its subcellular location is the host cell membrane. It localises to the host endosome membrane. The heterodimer glycoprotein H-glycoprotein L is required for the fusion of viral and plasma membranes leading to virus entry into the host cell. Following initial binding to host receptor, membrane fusion is mediated by the fusion machinery composed of gB and the heterodimer gH/gL. May also be involved in the fusion between the virion envelope and the outer nuclear membrane during virion morphogenesis. In Guinea pig cytomegalovirus (strain 22122) (GPCMV), this protein is Envelope glycoprotein H.